The chain runs to 199 residues: uncharacterized protein (199 aa).

A run of 4 helical transmembrane segments spans residues 41 to 61, 72 to 92, 109 to 129, and 145 to 165; these read LFIPPSACRIDLSVFPWAFIC, SLICSPCFSTVWVSLLICSPW, TVWVNLLICSPWAAKVVSIFV, and VTYSVFTGITGLLSLNCLLNL.

To M.pneumoniae MPN_037.

The protein localises to the cell membrane. This is an uncharacterized protein from Mycoplasma pneumoniae (strain ATCC 29342 / M129 / Subtype 1) (Mycoplasmoides pneumoniae).